Consider the following 170-residue polypeptide: F1 capsule antigen (170 aa).

An N-terminal signal peptide occupies residues 1-21 (MKKISSVIAIALFGTIATANA). Positions 100–150 (GNNHQFTTKVIGKDSRDFDISPKVNGENLVGDDVVLATGSQDFFVRSIGSK) are contains potential antigenic determinants that may stimulate T-cells.

It localises to the secreted. The protein resides in the capsule. The sequence is that of F1 capsule antigen (caf1) from Yersinia pestis.